The primary structure comprises 367 residues: Protein pxr1 (367 aa).

Disordered stretches follow at residues 1-28 and 156-336; these read MGLS…TDSF and KALK…PMGI. Residues 15–27 show a composition bias toward polar residues; sequence DPNNTKWSGNTDS. The G-patch domain maps to 25-79; it reads TDSFGHRMMKSQGWTPGEYLGAKDAAHAEFHTAANASHIRVVIKDNNLGLGAKIG. Positions 167–182 are enriched in acidic residues; sequence SSDDSDSSSDEEEEEK. Composition is skewed to basic residues over residues 209–221, 236–248, and 265–277; these read SKKS…SKKR, KSKK…KSKS, and KARK…KKRR. Residues 282-296 show a composition bias toward low complexity; the sequence is ATAGADTEETSSTSK. Residues 297 to 309 show a composition bias toward basic residues; the sequence is SSKKNSKKDKHKS. Residues 310 to 328 are compositionally biased toward low complexity; it reads SSASESSTKESTPTVTESS.

It belongs to the PINX1 family.

Its subcellular location is the nucleus. The protein resides in the nucleolus. Its function is as follows. Involved in rRNA-processing at A0, A1 and A2 sites and negatively regulates telomerase. In Sclerotinia sclerotiorum (strain ATCC 18683 / 1980 / Ss-1) (White mold), this protein is Protein pxr1 (pxr1).